The chain runs to 111 residues: Elevenin (111 aa).

Positions 1 to 24 (MAPSQKALLVLVLSMLLTASDSRA) are cleaved as a signal peptide. Cys29 and Cys38 are disulfide-bonded. Positions 44-111 (KRGGDSLSVG…TEQLDRLLTL (68 aa)) are excised as a propeptide.

This sequence belongs to the elevenin family. Monomer. In terms of tissue distribution, expressed by the venom duct.

The protein localises to the secreted. Its function is as follows. May mimic the function of prey elevenin neuropeptide. In vivo, intracranial injection in mice induces hyperactivity. The polypeptide is Elevenin (Conus ebraeus (Hebrew cone)).